The primary structure comprises 174 residues: Methionine-R-sulfoxide reductase B2, mitochondrial (174 aa).

The transit peptide at 1-61 (MARLLRALRG…PEQFYVTREK (61 aa)) directs the protein to the mitochondrion. Residues 62–172 (GTEAPFSGMY…NSVALKFKPS (111 aa)) enclose the MsrB domain. Zn(2+) is bound by residues Cys-82, Cys-85, Cys-138, and Cys-141. Catalysis depends on Cys-161, which acts as the Nucleophile.

The protein belongs to the MsrB Met sulfoxide reductase family. Zn(2+) serves as cofactor.

Its subcellular location is the mitochondrion. It catalyses the reaction L-methionyl-[protein] + [thioredoxin]-disulfide + H2O = L-methionyl-(R)-S-oxide-[protein] + [thioredoxin]-dithiol. The catalysed reaction is [thioredoxin]-disulfide + L-methionine + H2O = L-methionine (R)-S-oxide + [thioredoxin]-dithiol. Methionine-sulfoxide reductase that specifically reduces methionine (R)-sulfoxide back to methionine. While in many cases, methionine oxidation is the result of random oxidation following oxidative stress, methionine oxidation is also a post-translational modification that takes place on specific residue. Upon oxidative stress, may play a role in the preservation of mitochondrial integrity by decreasing the intracellular reactive oxygen species build-up through its scavenging role, hence contributing to cell survival and protein maintenance. In Rattus norvegicus (Rat), this protein is Methionine-R-sulfoxide reductase B2, mitochondrial (Msrb2).